An 842-amino-acid chain; its full sequence is MGFLTKIVDGNKREIKRLSKQADKVISLEEEMSILTDEEIRNKTKAFQERLQAEEDVSKQDKILEEILPEAFALVREGAKRVFNMTPYPVQIMGGIAIHNGDISEMRTGEGKTLTATMPTYLNALAGRGVHVITVNEYLASSQSEEMAELYNFLGLSVGLNLNSLSTEQKREAYNADITYSTNNELGFDYLRDNMVNYSEERVMRPLHFAIIDEVDSILIDEARTPLIISGEAEKSTSLYTQANVFAKMLKAEDDYNYDEKTKSVQLTDQGADKAERMFKLDNLYDLKNVDIITHINTALRANYTLQRDVDYMVVDGEVLIVDQFTGRTMPGRRFSEGLHQAIEAKEGVQIQNESKTMASITFQNYFRMYNKLAGMTGTAKTEEEEFRNIYNMTVTQIPTNRPVQREDRPDLIFISQKGKFDAVVEDVVEKHKKGQPILLGTVAVETSEYISQLLKKRGVRHDVLNAKNHEREAEIVSTAGQKGAVTIATNMAGRGTDIKLGEGVEELGGLAVIGTERHESRRIDDQLRGRSGRQGDRGESRFYLSLQDELMVRFGSERLQKMMGRLGMDDSTPIESKMVSRAVESAQKRVEGNNFDARKRILEYDEVLRKQREIIYGERNNIIDSESSSELVITMIRSTLDRAISYYVNEELEEIDYAPFINFVEDVFLHEGEVKEDEIKGKDREDIFDTVWAKIEKAYEAQKANIPDQFNEFERMILLRSIDGRWTDHIDTMDQLRQGIHLRSYGQQNPLRDYQNEGHQLFDTMMVNIEEDVSKYILKSIITVDDDIERDKAKEYQGQHVSAEDGKEKVKPQPVVKDNHIGRNDPCPCGSGKKYKNCCGK.

Residues Gln91, 109 to 113 (GEGKT), and Asp498 each bind ATP. The span at 798–824 (QGQHVSAEDGKEKVKPQPVVKDNHIGR) shows a compositional bias: basic and acidic residues. The disordered stretch occupies residues 798–827 (QGQHVSAEDGKEKVKPQPVVKDNHIGRNDP). Positions 828, 830, 839, and 840 each coordinate Zn(2+).

Belongs to the SecA family. As to quaternary structure, monomer and homodimer. Part of the essential Sec protein translocation apparatus which comprises SecA, SecYEG and auxiliary proteins SecDF. Other proteins may also be involved. The cofactor is Zn(2+).

Its subcellular location is the cell membrane. The protein localises to the cytoplasm. It catalyses the reaction ATP + H2O + cellular proteinSide 1 = ADP + phosphate + cellular proteinSide 2.. Part of the Sec protein translocase complex. Interacts with the SecYEG preprotein conducting channel. Has a central role in coupling the hydrolysis of ATP to the transfer of proteins into and across the cell membrane, serving as an ATP-driven molecular motor driving the stepwise translocation of polypeptide chains across the membrane. In Staphylococcus carnosus (strain TM300), this protein is Protein translocase subunit SecA.